A 550-amino-acid chain; its full sequence is Glucose-6-phosphate isomerase (550 aa).

Glu-356 (proton donor) is an active-site residue. Catalysis depends on residues His-387 and Lys-515.

It belongs to the GPI family.

It localises to the cytoplasm. It catalyses the reaction alpha-D-glucose 6-phosphate = beta-D-fructose 6-phosphate. It participates in carbohydrate biosynthesis; gluconeogenesis. The protein operates within carbohydrate degradation; glycolysis; D-glyceraldehyde 3-phosphate and glycerone phosphate from D-glucose: step 2/4. Its function is as follows. Catalyzes the reversible isomerization of glucose-6-phosphate to fructose-6-phosphate. This chain is Glucose-6-phosphate isomerase, found in Vibrio parahaemolyticus serotype O3:K6 (strain RIMD 2210633).